Here is a 159-residue protein sequence, read N- to C-terminus: 3-hydroxyacyl-[acyl-carrier-protein] dehydratase FabZ (159 aa).

His58 is an active-site residue.

The protein belongs to the thioester dehydratase family. FabZ subfamily.

The protein localises to the cytoplasm. The catalysed reaction is a (3R)-hydroxyacyl-[ACP] = a (2E)-enoyl-[ACP] + H2O. Involved in unsaturated fatty acids biosynthesis. Catalyzes the dehydration of short chain beta-hydroxyacyl-ACPs and long chain saturated and unsaturated beta-hydroxyacyl-ACPs. The protein is 3-hydroxyacyl-[acyl-carrier-protein] dehydratase FabZ of Helicobacter pylori (strain HPAG1).